The sequence spans 1883 residues: AF4/FMR2 family member lilli (1883 aa).

The span at 1 to 45 shows a compositional bias: low complexity; the sequence is MAQQQQQQHLQQQQQQHHQQQQLQQLQQQQQLPQYNNNLYNLNYN. Disordered stretches follow at residues 1–88, 140–311, 329–381, 449–540, 609–654, 796–827, 844–901, 922–962, 992–1018, 1039–1075, 1115–1145, 1170–1238, 1358–1413, 1450–1510, 1543–1583, 1595–1641, and 1783–1803; these read MAQQ…SEGD, INST…EKDI, SIAA…SCTT, MPTP…HHQH, LGGG…HLSR, SISS…TLQI, MQQK…KKHA, TAAA…LAKG, VAGS…LHAA, TAAA…ATAT, KNNR…QHKQ, QHQQ…KSDK, YAAE…GART, EHGV…DQVS, ANGS…KATT, QTST…PPSD, and PSNS…RIVP. Residues 57–80 show a composition bias toward basic and acidic residues; that stretch reads REKYERQQGIQSDDRETSLFEAPR. Composition is skewed to low complexity over residues 140–154, 161–178, 223–253, and 362–381; these read INST…SLLP, QQQQ…QQQQ, SASS…ASTA, and PLNS…SCTT. Residues 450-462 are compositionally biased toward pro residues; that stretch reads PTPPKASPTPPTA. The residue at position 458 (threonine 458) is a Phosphothreonine. A compositionally biased stretch (basic and acidic residues) spans 466-479; the sequence is LKSEKNHSLEKQDS. Over residues 481-491 the composition is skewed to acidic residues; it reads LENDLELSESD. A phosphoserine mark is found at serine 488 and serine 490. Residues 500–540 are compositionally biased toward low complexity; that stretch reads SAGNSSNSSETDSSESGSEASSKGEAQQQQQQQQQLLHHQH. Positions 609 to 625 are enriched in gly residues; sequence LGGGGGSGSTGGGGGSS. Composition is skewed to low complexity over residues 626-639 and 796-813; these read SSGM…SSSN and SISS…SAAG. Residues 867–877 are compositionally biased toward basic residues; it reads PRQKKPRKKKM. 2 positions are modified to phosphoserine: serine 887 and serine 888. Positions 930–942 form a DNA-binding region, a.T hook; the sequence is KKGRGRPRKQQQQ. The span at 939–962 shows a compositional bias: low complexity; sequence QQQQLQQTQSGNLSSASAGSLAKG. A phosphoserine mark is found at serine 953 and serine 955. Low complexity-rich tracts occupy residues 1124-1145, 1170-1186, 1200-1222, 1362-1376, and 1385-1399; these read SSSN…QHKQ, QHQQ…QQQQ, SSSS…SSSS, QQQQ…QQLH, and HYQQ…KAQQ. A compositionally biased stretch (basic and acidic residues) spans 1450-1467; the sequence is EHGVKPEPELDAGYEAKY. Serine 1546 is modified (phosphoserine). Threonine 1548 bears the Phosphothreonine mark. Low complexity-rich tracts occupy residues 1558–1583 and 1595–1606; these read QQQQ…KATT and QTSTTATQQPTT. Positions 1614–1625 are enriched in pro residues; it reads TPPPVAPPPPPR. Positions 1783–1794 are enriched in low complexity; the sequence is PSNSVGSQGSGS.

It belongs to the AF4 family.

It localises to the nucleus. Functionally, has a role in transcriptional regulation. Acts in parallel with the Ras/MAPK and the PI3K/PKB pathways in the control of cell identity and cellular growth. Essential for regulation of the cytoskeleton and cell growth but not for cell proliferation or growth rate. Required specifically for the microtubule-based basal transport of lipid droplets. Plays a partially redundant function downstream of Raf in cell fate specification in the developing eye. Pair-rule protein that regulates embryonic cellularization, gastrulation and segmentation. This chain is AF4/FMR2 family member lilli, found in Drosophila grimshawi (Hawaiian fruit fly).